The sequence spans 345 residues: uncharacterized protein (345 aa).

The protein localises to the plastid. It is found in the chloroplast. This is an uncharacterized protein from Chlamydomonas moewusii (Chlamydomonas eugametos).